The chain runs to 287 residues: Probable endonuclease 4 (287 aa).

Positions 69, 109, 146, 180, 183, 217, 230, 232, and 262 each coordinate Zn(2+).

The protein belongs to the AP endonuclease 2 family. It depends on Zn(2+) as a cofactor.

It catalyses the reaction Endonucleolytic cleavage to 5'-phosphooligonucleotide end-products.. Functionally, endonuclease IV plays a role in DNA repair. It cleaves phosphodiester bonds at apurinic or apyrimidinic (AP) sites, generating a 3'-hydroxyl group and a 5'-terminal sugar phosphate. The polypeptide is Probable endonuclease 4 (Petrotoga mobilis (strain DSM 10674 / SJ95)).